The sequence spans 343 residues: Selenide, water dikinase (343 aa).

Residue selenocysteine 15 is part of the active site. A non-standard amino acid (selenocysteine) is located at residue selenocysteine 15. ATP contacts are provided by residues lysine 18 and 45 to 47 (TAD). Aspartate 48 contributes to the Mg(2+) binding site. ATP is bound by residues aspartate 65, aspartate 88, and 135 to 137 (GHT). Aspartate 88 contributes to the Mg(2+) binding site. Aspartate 223 serves as a coordination point for Mg(2+).

Belongs to the selenophosphate synthase 1 family. Class I subfamily. In terms of assembly, homodimer. Mg(2+) is required as a cofactor.

The enzyme catalyses hydrogenselenide + ATP + H2O = selenophosphate + AMP + phosphate + 2 H(+). Synthesizes selenophosphate from selenide and ATP. This Carboxydothermus hydrogenoformans (strain ATCC BAA-161 / DSM 6008 / Z-2901) protein is Selenide, water dikinase.